The chain runs to 310 residues: Cytochrome f (310 aa).

The signal sequence occupies residues 1 to 23 (MRRLIPILLGSLVLSLSILVAPA). Positions 28, 48, 51, and 52 each coordinate heme. Residues 277-297 (IYGLLAFFVAVSLAQILLVLK) form a helical membrane-spanning segment.

Belongs to the cytochrome f family. In terms of assembly, the 4 large subunits of the cytochrome b6-f complex are cytochrome b6, subunit IV (17 kDa polypeptide, PetD), cytochrome f and the Rieske protein, while the 4 small subunits are PetG, PetL, PetM and PetN. The complex functions as a dimer. Requires heme as cofactor.

It localises to the cellular thylakoid membrane. Its function is as follows. Component of the cytochrome b6-f complex, which mediates electron transfer between photosystem II (PSII) and photosystem I (PSI), cyclic electron flow around PSI, and state transitions. The sequence is that of Cytochrome f from Prochlorococcus marinus (strain MIT 9303).